We begin with the raw amino-acid sequence, 425 residues long: Histidine--tRNA ligase (425 aa).

The protein belongs to the class-II aminoacyl-tRNA synthetase family. Homodimer.

The protein resides in the cytoplasm. It carries out the reaction tRNA(His) + L-histidine + ATP = L-histidyl-tRNA(His) + AMP + diphosphate + H(+). The chain is Histidine--tRNA ligase from Histophilus somni (strain 129Pt) (Haemophilus somnus).